A 452-amino-acid chain; its full sequence is MKQFMLAGVSSGVGKTTVTLGILKALADRGYQVQPYKIGPDYIDTAYHSRITKRPSRNVDSFMIPDDQSLAWSYYKWHGDADVAVVEGVMGLFDGLGTDKDCASSASVAKKLGIPVVLIIDGKATSTSAAAMVHGFATFDPDLDIAGVIINRVASQTHFELIKGAIERYTDVEVLGYLPKNATAELPSRHLGLIPDVEMDDLDRRFEDLGAATAKHINLDRLLEKAELPDKRMTNPFRISNDQPLTLAYALDDAFHFYYEDNLDFLRELNVQLVPFSPLKDKELPAADAYYFGGGFPEVYAQELMANADFRASVKKAHEQGRPIYAECGGLMYLGELLEVEGQVYEMVGIFKGKSLMTPGLKSFGYCQAETQVDSLFGPKGTAVRGHEFHHSVFETEEDTVLKLEKVRDGQVVAAWTGGYQKGRTFASYLHVHFYQDEQLLANWLDYIKEAN.

In terms of domain architecture, GATase cobBQ-type spans 246-439 (TLAYALDDAF…LHVHFYQDEQ (194 aa)). The Nucleophile role is filled by cysteine 328.

This sequence belongs to the CobB/CbiA family. Mg(2+) is required as a cofactor.

It carries out the reaction cob(II)yrinate + 2 L-glutamine + 2 ATP + 2 H2O = cob(II)yrinate a,c diamide + 2 L-glutamate + 2 ADP + 2 phosphate + 2 H(+). It participates in cofactor biosynthesis; adenosylcobalamin biosynthesis; cob(II)yrinate a,c-diamide from sirohydrochlorin (anaerobic route): step 10/10. Functionally, catalyzes the ATP-dependent amidation of the two carboxylate groups at positions a and c of cobyrinate, using either L-glutamine or ammonia as the nitrogen source. This Streptococcus sanguinis (strain SK36) protein is Cobyrinate a,c-diamide synthase.